Consider the following 214-residue polypeptide: Transcriptional regulatory protein MctR (214 aa).

The region spanning 8 to 124 (RVLLIDNHPL…EIVSAIETVA (117 aa)) is the Response regulatory domain. Asp59 is modified (4-aspartylphosphate). Residues 143–208 (VEEGSDPLTP…GLIRYALDHG (66 aa)) form the HTH luxR-type domain. The H-T-H motif DNA-binding region spans 167 to 186 (NKEIAETLGITSATAETHRK).

Its subcellular location is the cytoplasm. Member of the two-component regulatory system MctS/MctR, which activates mctP expression. The polypeptide is Transcriptional regulatory protein MctR (Rhizobium johnstonii (strain DSM 114642 / LMG 32736 / 3841) (Rhizobium leguminosarum bv. viciae)).